A 120-amino-acid polypeptide reads, in one-letter code: Ribosomal protein eL22-like 1 (120 aa).

It belongs to the eukaryotic ribosomal protein eL22 family.

This is Ribosomal protein eL22-like 1 (rpl22l1) from Xenopus tropicalis (Western clawed frog).